We begin with the raw amino-acid sequence, 1087 residues long: DNA polymerase II large subunit (1087 aa).

It belongs to the archaeal DNA polymerase II family. Heterodimer of a large subunit and a small subunit.

It carries out the reaction DNA(n) + a 2'-deoxyribonucleoside 5'-triphosphate = DNA(n+1) + diphosphate. The enzyme catalyses Exonucleolytic cleavage in the 3'- to 5'-direction to yield nucleoside 5'-phosphates.. In terms of biological role, possesses two activities: a DNA synthesis (polymerase) and an exonucleolytic activity that degrades single-stranded DNA in the 3'- to 5'-direction. Has a template-primer preference which is characteristic of a replicative DNA polymerase. This Thermoplasma acidophilum (strain ATCC 25905 / DSM 1728 / JCM 9062 / NBRC 15155 / AMRC-C165) protein is DNA polymerase II large subunit (polC).